Reading from the N-terminus, the 397-residue chain is Lysophospholipid transporter LplT (397 aa).

Topologically, residues 1–17 are periplasmic; the sequence is MSESVHTNTSLWSKGMK. A helical transmembrane segment spans residues 18 to 38; the sequence is AVIVAQFLSAFGDNALLFATL. The Cytoplasmic segment spans residues 39 to 52; that stretch reads ALLKAQFYPEWSQP. Residues 53–73 form a helical membrane-spanning segment; it reads ILQMVFVGAYILFAPFVGQVA. The Periplasmic portion of the chain corresponds to 74-90; the sequence is DSFAKGRVMMFANGLKL. The chain crosses the membrane as a helical span at residues 91-111; the sequence is LGAASICFGINPFLGYTLVGV. Residues 112–144 lie on the Cytoplasmic side of the membrane; the sequence is GAAAYSPAKYGILGELTTGSKLVKANGLMEAST. Residues 145–165 traverse the membrane as a helical segment; it reads IAAILLGSVAGGVLADWHVLV. Ala166 is a topological domain (periplasmic). Residues 167–187 form a helical membrane-spanning segment; sequence LAACALAYGGAVVANIYIPKL. At 188 to 226 the chain is on the cytoplasmic side; it reads AAARPGQSWNLINMTRSFLNACTSLWRNGETRFSLVGTS. A helical membrane pass occupies residues 227–247; it reads LFWGAGVTLRFLLVLWVPVAL. At 248–256 the chain is on the periplasmic side; it reads GITDNATPT. The chain crosses the membrane as a helical span at residues 257-277; the sequence is YLNAMVAIGIVVGAGAAAKLV. The Cytoplasmic segment spans residues 278–280; the sequence is TLE. The chain crosses the membrane as a helical span at residues 281 to 301; it reads TMSRCMPAGILIGVVVLIFSL. Residues 302–304 lie on the Periplasmic side of the membrane; the sequence is QHE. The helical transmembrane segment at 305–325 threads the bilayer; the sequence is LLPAYALLMLIGVMGGFFVVP. Topologically, residues 326–343 are cytoplasmic; sequence LNALLQERGKKSVGAGNA. Residues 344–364 traverse the membrane as a helical segment; that stretch reads IAVQNLGENSAMLLMLGIYSL. Residues 365–366 lie on the Periplasmic side of the membrane; that stretch reads AV. Residues 367–387 form a helical membrane-spanning segment; that stretch reads MVGIPVVPIGIGFGALFALAI. Topologically, residues 388 to 397 are cytoplasmic; it reads TALWIWQRRH.

Belongs to the major facilitator superfamily. LplT (TC 2.A.1.42) family.

It localises to the cell inner membrane. Functionally, catalyzes the facilitated diffusion of 2-acyl-glycero-3-phosphoethanolamine (2-acyl-GPE) into the cell. This is Lysophospholipid transporter LplT from Shigella sonnei (strain Ss046).